A 663-amino-acid chain; its full sequence is Glucans biosynthesis glucosyltransferase H (663 aa).

6 consecutive transmembrane segments (helical) span residues 64–86, 101–123, 413–435, 470–492, 558–580, and 584–606; these read WMLG…DTIA, LAPL…VVLM, LVIG…AGLI, AWAM…ILVL, EAWA…FWFT, and LTAT…LGAH.

The protein belongs to the glycosyltransferase 2 family. OpgH subfamily.

The protein localises to the cell inner membrane. The protein operates within glycan metabolism; osmoregulated periplasmic glucan (OPG) biosynthesis. Involved in the biosynthesis of osmoregulated periplasmic glucans (OPGs). The protein is Glucans biosynthesis glucosyltransferase H of Caulobacter vibrioides (strain ATCC 19089 / CIP 103742 / CB 15) (Caulobacter crescentus).